A 348-amino-acid polypeptide reads, in one-letter code: MTAPSQVLKIRRPDDWHLHLRDGDMLKTVVPYTSEIYGRAIVMPNLAPPVTTVEAAVAYRQRILDAVPAGHDFTPLMTCYLTDSLDPNELERGFNEGVFTAAKLYPANATTNSSHGVTSVDAIMPVLERMEKIGMPLLVHGEVTHADIDIFDREARFIESVMEPLRQRLTALKVVFEHITTKDAADYVRDGNERLAATITPQHLMFNRNHMLVGGVRPHLYCLPILKRNIHQQALRELVASGFNRVFLGTDSAPHARHRKESSCGCAGCFNAPTALGSYATVFEEMNALQYFEAFCSVNGPQFYGLPVNDTFIELVREEQQVAESIALTDDTLVPFLAGETVRWSVKQ.

His17 and His19 together coordinate Zn(2+). Residues 19 to 21 (HLR) and Asn45 each bind substrate. Positions 103, 140, and 178 each coordinate Zn(2+). Residue Lys103 is modified to N6-carboxylysine. Residue His140 participates in substrate binding. Position 223 (Leu223) interacts with substrate. Asp251 lines the Zn(2+) pocket. Residue Asp251 is part of the active site. Substrate contacts are provided by His255 and Ala267.

This sequence belongs to the metallo-dependent hydrolases superfamily. DHOase family. Class II DHOase subfamily. Homodimer. Zn(2+) is required as a cofactor.

It carries out the reaction (S)-dihydroorotate + H2O = N-carbamoyl-L-aspartate + H(+). It participates in pyrimidine metabolism; UMP biosynthesis via de novo pathway; (S)-dihydroorotate from bicarbonate: step 3/3. In terms of biological role, catalyzes the reversible cyclization of carbamoyl aspartate to dihydroorotate. This Escherichia coli (strain UTI89 / UPEC) protein is Dihydroorotase.